The primary structure comprises 325 residues: 33 kDa chaperonin (325 aa).

Disulfide bonds link C260–C262 and C293–C296.

The protein belongs to the HSP33 family. Under oxidizing conditions two disulfide bonds are formed involving the reactive cysteines. Under reducing conditions zinc is bound to the reactive cysteines and the protein is inactive.

It is found in the cytoplasm. Redox regulated molecular chaperone. Protects both thermally unfolding and oxidatively damaged proteins from irreversible aggregation. Plays an important role in the bacterial defense system toward oxidative stress. In Aquifex aeolicus (strain VF5), this protein is 33 kDa chaperonin.